A 300-amino-acid polypeptide reads, in one-letter code: Cation-efflux pump FieF (300 aa).

A helical membrane pass occupies residues 24–44 (LLIKIFAWWYTGSVSILAALV). Aspartate 45 and aspartate 49 together coordinate Zn(2+). 2 consecutive transmembrane segments (helical) span residues 82–102 (AALA…LTSI) and 114–134 (PGVG…LVTF). Zn(2+)-binding residues include histidine 153 and aspartate 157. Transmembrane regions (helical) follow at residues 156-176 (SDVM…YGWH) and 178-198 (ADAL…LRMG).

Belongs to the cation diffusion facilitator (CDF) transporter (TC 2.A.4) family. FieF subfamily. In terms of assembly, homodimer.

The protein resides in the cell inner membrane. The catalysed reaction is Zn(2+)(in) + H(+)(out) = Zn(2+)(out) + H(+)(in). The enzyme catalyses Cd(2+)(in) + H(+)(out) = Cd(2+)(out) + H(+)(in). It carries out the reaction Fe(2+)(in) + H(+)(out) = Fe(2+)(out) + H(+)(in). Its function is as follows. Divalent metal cation transporter which exports Zn(2+), Cd(2+) and possibly Fe(2+). May be involved in zinc and iron detoxification by efflux. The polypeptide is Cation-efflux pump FieF (Salmonella schwarzengrund (strain CVM19633)).